The following is a 551-amino-acid chain: MKKMTAMLFSMAVGLNAVSMTAMADAPKEQETDVLLIGGGIMSATLGTYLQELQPDWSMTMVERLDGVAKESSNGWNNAGTGHSALMELNYTPQKKDGSISIEKAVEINEAFQVSRQFWSHQVNSGVMHDPHSFINTVPHMSFVWGDQNVNFLRARYAALQQSSLFRGMKFSEDHAQIKEWAPLVMEGRDPNQKVAATRTEIGTDVNYGEITHQLVASLQKKDDFHLQLSTEVRGFKRNADNSWSVTVADLKNNEAEHVIKAKFVFIGAGGAALKLLQETGIPEADDYAGFPVGGQFLVSENPEVVNRHLAKVYGQASVGAPPMSVPHIDTRMLDGKRVVLFGPFATFSTKFLKNGSLWDLLSSTTTSNFMPMVDVGMDNFDLVKYLMSQVMLSDDDRFAALQEYYPQAKKEDWRLWQAGQRVQIIKRDPKEGGVLRLGTEVVSDKEGTIAALLGASPGASTAAPIMLHLMEKVFKDKVASPEWQAKLKTIIPSYGTKLNGNVAATEQELEFTSRVLQLKYEKPQTAAAAPQAQPQLKPQPDAKPVADIAL.

A compositionally biased stretch (low complexity) spans Q525 to K544. The segment at Q525–L551 is disordered.

This sequence belongs to the MQO family. FAD serves as cofactor.

The enzyme catalyses (S)-malate + a quinone = a quinol + oxaloacetate. It participates in carbohydrate metabolism; tricarboxylic acid cycle; oxaloacetate from (S)-malate (quinone route): step 1/1. In Enterobacter sp. (strain 638), this protein is Probable malate:quinone oxidoreductase.